Consider the following 614-residue polypeptide: Vitamin B12 transporter BtuB (614 aa).

Positions 1-20 are cleaved as a signal peptide; the sequence is MIKKASLLTACSVTAFSAWA. The short motif at 26–33 is the TonB box element; the sequence is DTLVVTAN. The 115-residue stretch at 38–152 folds into the TBDR plug domain; that stretch reads PRSTVLAPTT…IGGVVNIITT (115 aa). Cyanocob(III)alamin-binding positions include L83, S85, N92, and 110–111; that span reads VS. Positions 155–614 constitute a TBDR beta-barrel domain; the sequence is HPGTEISAGW…EYTLSGSYTF (460 aa). Transmembrane regions (beta stranded) follow at residues 158–165, 169–178, and 184–195; these read TEISAGWG, YQNYDVSTQQ, and TRVTLLGDYAHT. Residues D199, Q211, D213, and D215 each coordinate Ca(2+). Beta stranded transmembrane passes span 217–227 and 232–248; these read FLSKTLYGALE and DVWS…NRTN. Residues Y249 and D250 each coordinate Ca(2+). A251 is a cyanocob(III)alamin binding site. D261 lines the Ca(2+) pocket. 14 beta stranded membrane-spanning segments follow: residues 263-277, 279-296, 309-325, 328-337, 353-369, 371-381, 385-400, 403-417, 434-443, 449-458, 473-490, 494-509, 517-529, and 535-550; these read RKLY…LRYN, ELIK…KDYN, TLDE…NNII, HGNIGAGVDW, YDQR…QQVG, FTFEGAGRSDD, FGRH…WEFI, YRFI…KAPN, KSKQWEGAFE, VNWRISGYRN, YYNE…TANF, PLTH…ARNA, RRAK…QLDW, and DWGI…YDKD. T309 provides a ligand contact to cyanocob(III)alamin. Residue R517 coordinates cyanocob(III)alamin. Y551 contacts cyanocob(III)alamin. 3 consecutive transmembrane segments (beta stranded) span residues 558 to 572, 585 to 596, and 602 to 614; these read TVKM…LAVA, IANLFDKDYETV, and AGRE…SYTF. A TonB C-terminal box motif is present at residues 597-614; it reads YGYQTAGREYTLSGSYTF.

The protein belongs to the TonB-dependent receptor family. BtuB (TC 1.B.14.3.1) subfamily.

The protein localises to the cell outer membrane. In terms of biological role, involved in the active translocation of vitamin B12 (cyanocobalamin) across the outer membrane to the periplasmic space. It derives its energy for transport by interacting with the trans-periplasmic membrane protein TonB. This is Vitamin B12 transporter BtuB from Escherichia coli O6:K15:H31 (strain 536 / UPEC).